Reading from the N-terminus, the 561-residue chain is DNA ligase B (561 aa).

The N6-AMP-lysine intermediate role is filled by K128.

It belongs to the NAD-dependent DNA ligase family. LigB subfamily.

It catalyses the reaction NAD(+) + (deoxyribonucleotide)n-3'-hydroxyl + 5'-phospho-(deoxyribonucleotide)m = (deoxyribonucleotide)n+m + AMP + beta-nicotinamide D-nucleotide.. In terms of biological role, catalyzes the formation of phosphodiester linkages between 5'-phosphoryl and 3'-hydroxyl groups in double-stranded DNA using NAD as a coenzyme and as the energy source for the reaction. This is DNA ligase B from Pseudomonas syringae pv. tomato (strain ATCC BAA-871 / DC3000).